Reading from the N-terminus, the 446-residue chain is Na(+)-translocating NADH-quinone reductase subunit A (446 aa).

This sequence belongs to the NqrA family. As to quaternary structure, composed of six subunits; NqrA, NqrB, NqrC, NqrD, NqrE and NqrF.

It catalyses the reaction a ubiquinone + n Na(+)(in) + NADH + H(+) = a ubiquinol + n Na(+)(out) + NAD(+). NQR complex catalyzes the reduction of ubiquinone-1 to ubiquinol by two successive reactions, coupled with the transport of Na(+) ions from the cytoplasm to the periplasm. NqrA to NqrE are probably involved in the second step, the conversion of ubisemiquinone to ubiquinol. The chain is Na(+)-translocating NADH-quinone reductase subunit A from Pasteurella multocida (strain Pm70).